The following is a 176-amino-acid chain: NAD(P)H-quinone oxidoreductase subunit 6, chloroplastic (176 aa).

5 helical membrane passes run 10-30 (FLLVFLGSGLIVGGLGVVLLT), 32-52 (PIFSAFSLGLVLVCISLFFSL), 61-81 (AQLLIYVGAINVLILFAVMFM), 92-112 (LWTVGDGITSLVCTSIFISLI), and 152-172 (FFLPFELISIILLVSLIGAIA).

This sequence belongs to the complex I subunit 6 family. As to quaternary structure, NDH is composed of at least 16 different subunits, 5 of which are encoded in the nucleus.

Its subcellular location is the plastid. It localises to the chloroplast thylakoid membrane. The catalysed reaction is a plastoquinone + NADH + (n+1) H(+)(in) = a plastoquinol + NAD(+) + n H(+)(out). It carries out the reaction a plastoquinone + NADPH + (n+1) H(+)(in) = a plastoquinol + NADP(+) + n H(+)(out). Its function is as follows. NDH shuttles electrons from NAD(P)H:plastoquinone, via FMN and iron-sulfur (Fe-S) centers, to quinones in the photosynthetic chain and possibly in a chloroplast respiratory chain. The immediate electron acceptor for the enzyme in this species is believed to be plastoquinone. Couples the redox reaction to proton translocation, and thus conserves the redox energy in a proton gradient. This Oenothera argillicola (Appalachian evening primrose) protein is NAD(P)H-quinone oxidoreductase subunit 6, chloroplastic (ndhG).